The following is a 239-amino-acid chain: Small ribosomal subunit protein uS3 (239 aa).

A KH type-2 domain is found at Val-39–Arg-107. The tract at residues Gly-214–Arg-239 is disordered. Over residues Glu-216–Arg-239 the composition is skewed to basic and acidic residues.

It belongs to the universal ribosomal protein uS3 family. Part of the 30S ribosomal subunit. Forms a tight complex with proteins S10 and S14.

In terms of biological role, binds the lower part of the 30S subunit head. Binds mRNA in the 70S ribosome, positioning it for translation. The polypeptide is Small ribosomal subunit protein uS3 (Xylella fastidiosa (strain M12)).